The sequence spans 681 residues: Propionyl-CoA carboxylase alpha chain (681 aa).

In terms of domain architecture, Biotin carboxylation spans methionine 1 to proline 466. Residues lysine 116, serine 148–isoleucine 209, glutamate 200, and asparagine 235 contribute to the ATP site. The 198-residue stretch at lysine 120–alanine 317 folds into the ATP-grasp domain. 3 residues coordinate Mg(2+): glutamate 275, glutamate 288, and asparagine 290. Positions 275, 288, and 290 each coordinate Mn(2+). Glutamate 288 is an active-site residue. Phenylalanine 348 lines the biotin pocket. One can recognise a Biotinyl-binding domain in the interval leucine 602–glutamate 681. Position 647 is an N6-biotinyllysine (lysine 647).

In terms of assembly, the holoenzyme is a dodecamer composed of 6 PccA/alpha subunits and 6 PccB/beta subunits. Mg(2+) serves as cofactor. It depends on Mn(2+) as a cofactor. Biotin is required as a cofactor. Post-translationally, the biotin cofactor is covalently attached to the C-terminal biotinyl-binding domain and is required for the catalytic activity.

It catalyses the reaction propanoyl-CoA + hydrogencarbonate + ATP = (S)-methylmalonyl-CoA + ADP + phosphate + H(+). The protein operates within metabolic intermediate metabolism; propanoyl-CoA degradation; succinyl-CoA from propanoyl-CoA: step 1/3. In terms of biological role, this is one of the 2 subunits of the biotin-dependent propionyl-CoA carboxylase (PCC), the enzyme catalyzing the carboxylation of propionyl-CoA/propanoyl-CoA to D-methylmalonyl-CoA/(S)-methylmalonyl-CoA. Within the holoenzyme, the alpha subunit catalyzes the ATP-dependent carboxylation of the biotin carried by the biotin carboxyl carrier (BCC) domain, while the beta subunit then tranfers the carboxyl group from carboxylated biotin to propionyl-CoA. The protein is Propionyl-CoA carboxylase alpha chain of Ruegeria pomeroyi (strain ATCC 700808 / DSM 15171 / DSS-3) (Silicibacter pomeroyi).